The sequence spans 385 residues: Methionine aminopeptidase 1 (385 aa).

Residues 6 to 59 (SRVCETEGCSSEAKLQCPTCIKLGIQGSYFCSQECFKGSWATHKLLHKKAKDDK) form a C6H2-type zinc finger. Residues Cys9, Cys14, Cys22, Cys25, Cys36, Cys40, His48, and His52 each coordinate Zn(2+). His203 contacts a protein. Positions 220, 231, and 294 each coordinate Zn(2+). His301 lines the a protein pocket. The Zn(2+) site is built by Glu327 and Glu358.

It belongs to the peptidase M24A family. Methionine aminopeptidase type 1 subfamily. As to quaternary structure, associates with the 60S ribosomal subunit of the 80S translational complex. Zn(2+) serves as cofactor. The cofactor is Co(2+). It depends on Mn(2+) as a cofactor. Fe(2+) is required as a cofactor.

It is found in the cytoplasm. It carries out the reaction Release of N-terminal amino acids, preferentially methionine, from peptides and arylamides.. Its function is as follows. Cotranslationally removes the N-terminal methionine from nascent proteins. The N-terminal methionine is often cleaved when the second residue in the primary sequence is small and uncharged (Met-Ala-, Cys, Gly, Pro, Ser, Thr, or Val). This is Methionine aminopeptidase 1 (metap1) from Xenopus laevis (African clawed frog).